The chain runs to 123 residues: Anti-lipopolysaccharide factor (123 aa).

A signal peptide spans 1 to 26 (MRKGVVAGLCLALVVMCLYLPQPCEA). An N-linked (GlcNAc...) asparagine glycan is attached at Asn-45. The cysteines at positions 55 and 76 are disulfide-linked.

In terms of tissue distribution, isoform 1 is highly expressed in muscle and stomach, moderately in heart and gill and at lower levels in hemocytes and hepatopancreas. Isoform 2 is mainly expressed in gill, hepatopancreas, muscle and eyestalk.

The protein resides in the secreted. In terms of biological role, may bind to bacterial LPS and thus specifically inhibit the LPS-mediated activation of the hemolymph coagulation. It has a strong antibacterial effect especially on the growth of Gram-negative bacteria. The chain is Anti-lipopolysaccharide factor from Portunus trituberculatus (Swimming crab).